Reading from the N-terminus, the 354-residue chain is Methylthioribose-1-phosphate isomerase (354 aa).

The active-site Proton donor is Asp246.

This sequence belongs to the eIF-2B alpha/beta/delta subunits family. MtnA subfamily.

Its subcellular location is the cytoplasm. It localises to the nucleus. It catalyses the reaction 5-(methylsulfanyl)-alpha-D-ribose 1-phosphate = 5-(methylsulfanyl)-D-ribulose 1-phosphate. It functions in the pathway amino-acid biosynthesis; L-methionine biosynthesis via salvage pathway; L-methionine from S-methyl-5-thio-alpha-D-ribose 1-phosphate: step 1/6. Its function is as follows. Catalyzes the interconversion of methylthioribose-1-phosphate (MTR-1-P) into methylthioribulose-1-phosphate (MTRu-1-P). This is Methylthioribose-1-phosphate isomerase (mri1) from Xenopus laevis (African clawed frog).